A 674-amino-acid polypeptide reads, in one-letter code: MSLMKERKPKKPHYIPRPPGKPFKYKCFQCPFTCNEKSHLFNHMKYGLCKNSITVVTDQDRIIKNPKVNSMDQNQTSNEPFAKSSVPAINSSLESKMLHSVAREEAKENLDLKNEPKSHAEKTTVSKEFTLSPPVAISQINKPPSLDGVMRPSAFIPVGEHRVKKGAENRTIPELTSISAEPAKGVHSIKSAFHSLPTPWKSGLVSPDFSQKSSIPRYIRPMISEYPPQFYSEAGLPAVFSPYLFPQTECENPMLSIYSTPDQRPYLPHPLQPSGLPLPKPINAPFEHYRLLQQFQQNPQLHYGFYRPTEHPYFSYGLKVPPAPGLSKEHTSQSMDSPTFIYPSSHPSRLYPLEGFQKLFEIQKETPPVLAKNLDSKSDSESVKMSPRAGSAATGSPERPSPTNFTQSSQGHEGIFDLSTKSISTSDKIGKDFTSGKAMRKSTDSQTIISRENSPSFGNDGVQSHSEGITVTDDAVHDDTIAPLNLSKKSEVESRDIVDTVNNSDFTNERVGFMEMQDLPLNLSVKDSGSNHNTLCADERVLLPRQSTSPPVYQAIQTTDNRAPTTTGIHSLGIIENCDEQKQSAAVALCQLATSSPGVPPRGTEDEFPEKETVVPEQVQPRSPAAQETETDVGARGQKRTNSKELGKSQSSTKKQKAVDSGRMFTLRKRPRVS.

The CCHC-type zinc finger occupies 25–51 (YKCFQCPFTCNEKSHLFNHMKYGLCKN). 4 residues coordinate Zn(2+): Cys27, Cys30, His43, and Cys49. Disordered stretches follow at residues 105–125 (EAKE…KTTV), 370–466 (LAKN…QSHS), and 594–674 (TSSP…PRVS). Polar residues-rich tracts occupy residues 401–411 (SPTNFTQSSQG) and 444–466 (DSQT…QSHS).

It is found in the nucleus. Functionally, transcription factor involved in epidermis differentiation. In Xenopus laevis (African clawed frog), this protein is Zinc finger protein 750 (znf750).